We begin with the raw amino-acid sequence, 413 residues long: Glycosyl hydrolase family 109 protein 2 (413 aa).

NAD(+)-binding positions include 26–27, aspartate 48, 96–99, 116–117, and asparagine 145; these read NR, WLTH, and EV. Tyrosine 174 provides a ligand contact to substrate. Residues 191 to 195 and tyrosine 208 contribute to the NAD(+) site; that span reads YHNHW. Residues 208–211 and tyrosine 290 contribute to the substrate site; that span reads YPTH.

This sequence belongs to the Gfo/Idh/MocA family. Glycosyl hydrolase 109 subfamily. The cofactor is NAD(+).

In terms of biological role, glycosidase. In Phocaeicola vulgatus (strain ATCC 8482 / DSM 1447 / JCM 5826 / CCUG 4940 / NBRC 14291 / NCTC 11154) (Bacteroides vulgatus), this protein is Glycosyl hydrolase family 109 protein 2.